The following is a 314-amino-acid chain: Pathogenicity locus probable regulatory protein HrpR (314 aa).

In terms of domain architecture, Sigma-54 factor interaction spans 11 to 239 (TRWNVTALSA…LKSAANAICP (229 aa)). ATP contacts are provided by residues 39 to 46 (GETGTGKD) and 101 to 110 (SNGGTLYLDE). The H-T-H motif DNA-binding region spans 281-300 (FDAVLEELELPRRTLYHRMK).

Its function is as follows. Member of the two-component regulatory system HrpR/HrpS that regulates the activation of the sigma factor hrpL which itself induces the expression of hprD as well as other hrp loci which are involved in plant pathogenicity, hrmA and avr genes. Probably interacts with sigma-54. The sequence is that of Pathogenicity locus probable regulatory protein HrpR (hrpR) from Pseudomonas syringae pv. syringae.